A 472-amino-acid polypeptide reads, in one-letter code: Phosphoenolpyruvate carboxylase (472 aa).

It belongs to the PEPCase type 2 family. As to quaternary structure, homotetramer. Mg(2+) is required as a cofactor.

The catalysed reaction is oxaloacetate + phosphate = phosphoenolpyruvate + hydrogencarbonate. Its function is as follows. Catalyzes the irreversible beta-carboxylation of phosphoenolpyruvate (PEP) to form oxaloacetate (OAA), a four-carbon dicarboxylic acid source for the tricarboxylic acid cycle. The protein is Phosphoenolpyruvate carboxylase of Pyrococcus furiosus (strain ATCC 43587 / DSM 3638 / JCM 8422 / Vc1).